The following is a 319-amino-acid chain: Acetyl-coenzyme A carboxylase carboxyl transferase subunit alpha (319 aa).

A CoA carboxyltransferase C-terminal domain is found at 35-296 (DLDKEIKQLE…KQRLIEQLNE (262 aa)).

The protein belongs to the AccA family. Acetyl-CoA carboxylase is a heterohexamer composed of biotin carboxyl carrier protein (AccB), biotin carboxylase (AccC) and two subunits each of ACCase subunit alpha (AccA) and ACCase subunit beta (AccD).

It localises to the cytoplasm. The enzyme catalyses N(6)-carboxybiotinyl-L-lysyl-[protein] + acetyl-CoA = N(6)-biotinyl-L-lysyl-[protein] + malonyl-CoA. Its pathway is lipid metabolism; malonyl-CoA biosynthesis; malonyl-CoA from acetyl-CoA: step 1/1. In terms of biological role, component of the acetyl coenzyme A carboxylase (ACC) complex. First, biotin carboxylase catalyzes the carboxylation of biotin on its carrier protein (BCCP) and then the CO(2) group is transferred by the carboxyltransferase to acetyl-CoA to form malonyl-CoA. This chain is Acetyl-coenzyme A carboxylase carboxyl transferase subunit alpha, found in Aliivibrio salmonicida (strain LFI1238) (Vibrio salmonicida (strain LFI1238)).